A 473-amino-acid chain; its full sequence is UDP-N-acetylmuramate--L-alanine ligase (473 aa).

122–128 (GTHGKTT) lines the ATP pocket.

The protein belongs to the MurCDEF family.

The protein localises to the cytoplasm. The enzyme catalyses UDP-N-acetyl-alpha-D-muramate + L-alanine + ATP = UDP-N-acetyl-alpha-D-muramoyl-L-alanine + ADP + phosphate + H(+). The protein operates within cell wall biogenesis; peptidoglycan biosynthesis. Functionally, cell wall formation. This Teredinibacter turnerae (strain ATCC 39867 / T7901) protein is UDP-N-acetylmuramate--L-alanine ligase.